The chain runs to 823 residues: Spindle pole body component SPC97 (823 aa).

Belongs to the TUBGCP family. In terms of assembly, interacts with TUB4, SPC72 and SPC98.

It is found in the nucleus. It localises to the cytoplasm. The protein localises to the cytoskeleton. The protein resides in the microtubule organizing center. Its subcellular location is the spindle pole body. Involved in microtubule organization by the microtubule organizing center, the spindle pole body (SPB). Probably part of the microtubule attachment site at the SPB. The protein is Spindle pole body component SPC97 (SPC97) of Saccharomyces cerevisiae (strain ATCC 204508 / S288c) (Baker's yeast).